Here is an 818-residue protein sequence, read N- to C-terminus: Cytosolic phospholipase A2 delta (818 aa).

Residues 5–124 (SPGGPPGHPY…LPGKLLRKTF (120 aa)) form the C2 domain. Ca(2+) contacts are provided by aspartate 38, aspartate 44, aspartate 94, aspartate 96, and aspartate 102. The PLA2c domain maps to 273-818 (GCPEELAVHL…LEARPPRAQT (546 aa)). 330 to 331 (GG) serves as a coordination point for substrate. The active-site Nucleophile is serine 361. Aspartate 647 (proton acceptor) is an active-site residue.

The cofactor is Ca(2+). As to expression, expressed in stratified squamous epithelia, such as those in skin and cervix, but not in other tissues. Strongly expressed in the upper spinous layer of the psoriatic epidermis, expressed weakly and discontinuously in atopic dermatitis and mycosis fungoides, and not detected in the epidermis of normal skin.

It localises to the cytoplasm. The protein resides in the cytosol. The protein localises to the membrane. The catalysed reaction is a 1,2-diacyl-sn-glycero-3-phosphocholine + H2O = a 1-acyl-sn-glycero-3-phosphocholine + a fatty acid + H(+). The enzyme catalyses 1-hexadecanoyl-2-(5Z,8Z,11Z,14Z-eicosatetraenoyl)-sn-glycero-3-phosphocholine + H2O = 1-hexadecanoyl-sn-glycero-3-phosphocholine + (5Z,8Z,11Z,14Z)-eicosatetraenoate + H(+). It catalyses the reaction 1-hexadecanoyl-2-(9Z,12Z-octadecadienoyl)-sn-glycero-3-phosphocholine + H2O = (9Z,12Z)-octadecadienoate + 1-hexadecanoyl-sn-glycero-3-phosphocholine + H(+). It carries out the reaction 1-hexadecanoyl-2-(9Z-octadecenoyl)-sn-glycero-3-phosphocholine + H2O = 1-hexadecanoyl-sn-glycero-3-phosphocholine + (9Z)-octadecenoate + H(+). The catalysed reaction is 1-hexadecanoyl-2-(5Z,8Z,11Z,14Z-eicosatetraenoyl)-sn-glycero-3-phosphoethanolamine + H2O = 1-hexadecanoyl-sn-glycero-3-phosphoethanolamine + (5Z,8Z,11Z,14Z)-eicosatetraenoate + H(+). The enzyme catalyses 1-hexadecanoyl-2-(9Z,12Z-octadecadienoyl)-sn-glycero-3-phosphoethanolamine + H2O = 1-hexadecanoyl-sn-glycero-3-phosphoethanolamine + (9Z,12Z)-octadecadienoate + H(+). The protein operates within lipid metabolism; fatty acid metabolism. Its activity is regulated as follows. Stimulated by cytosolic Ca(2+). Its function is as follows. Calcium-dependent phospholipase A2 that selectively hydrolyzes glycerophospholipids in the sn-2 position. Has a preference for linoleic acid at the sn-2 position. The sequence is that of Cytosolic phospholipase A2 delta from Homo sapiens (Human).